The primary structure comprises 528 residues: Esterase PE16 (528 aa).

The region spanning 1-93 is the PE domain; sequence MSFVFAVPEM…AGWYVDAEAA (93 aa). The tract at residues 94–143 is linker; sequence NAALVDTAATGASELGSGGRTALILGSTGTPRPPFDYMQQVYDRYIAPHY. One can recognise a PE-PPE domain in the interval 149–369; it reads SGLYTPAQFQ…LRAIIELGYD (221 aa). Ser-199 is an active-site residue. The chain crosses the membrane as a helical span at residues 503–523; sequence IALLVFAAGIPAVAAVAILTG.

This sequence belongs to the mycobacterial PE family.

The protein localises to the membrane. The catalysed reaction is a hexanoate ester + H2O = an aliphatic alcohol + hexanoate + H(+). It catalyses the reaction an octanoate ester + H2O = an aliphatic alcohol + octanoate + H(+). It carries out the reaction a butanoate ester + H2O = an aliphatic alcohol + butanoate + H(+). Its activity is regulated as follows. Esterase activity is significantly inhibited by the serine modifier phenylmethylsulfonyl fluoride (PMSF). Its function is as follows. Esterase that hydrolyzes short to medium chain fatty acid esters with the highest specific activity for p-nitrophenyl caproate (pNPC6). Has lower activity with p-nitrophenyl caprylate (pNPC8) and p-nitrophenyl butyrate (pNPC4). Has weak activity with p-nitrophenyl caprate (pNPC10) and p-nitrophenyl laurate (pNPC12). Does not possess lipolytic activity and cutinase activity. The protein is Esterase PE16 of Mycobacterium tuberculosis (strain ATCC 25618 / H37Rv).